A 205-amino-acid chain; its full sequence is Small ribosomal subunit protein uS4 (205 aa).

The tract at residues 18–45 (NIWGRPKSPVNRREYGPGQHGQRRKGKL) is disordered. Residues 94–157 (RRLDTVVYRA…KQLAFVLEAS (64 aa)) form the S4 RNA-binding domain.

This sequence belongs to the universal ribosomal protein uS4 family. As to quaternary structure, part of the 30S ribosomal subunit. Contacts protein S5. The interaction surface between S4 and S5 is involved in control of translational fidelity.

Its function is as follows. One of the primary rRNA binding proteins, it binds directly to 16S rRNA where it nucleates assembly of the body of the 30S subunit. With S5 and S12 plays an important role in translational accuracy. This Rhodopseudomonas palustris (strain BisA53) protein is Small ribosomal subunit protein uS4.